The chain runs to 214 residues: Putative F-box protein At3g58910 (214 aa).

Residues 1 to 47 (MDRVSSLPDELLCHILSFLTTKETALTSLLSKREIIPLIKSVVFPTL) form the F-box domain.

The polypeptide is Putative F-box protein At3g58910 (Arabidopsis thaliana (Mouse-ear cress)).